The primary structure comprises 202 residues: Small ribosomal subunit protein uS4c (202 aa).

Basic residues predominate over residues 1 to 13 (MSRYRGPRMKMIR). A disordered region spans residues 1–41 (MSRYRGPRMKMIRRPGTLPGLTSKTPGTKVGSSDRSTSSKK). Residues 29-41 (KVGSSDRSTSSKK) are compositionally biased toward low complexity. An S4 RNA-binding domain is found at 90-153 (MRLDNTIFRL…KCRLVDRRDM (64 aa)).

Belongs to the universal ribosomal protein uS4 family. Part of the 30S ribosomal subunit. Contacts protein S5. The interaction surface between S4 and S5 is involved in control of translational fidelity.

It is found in the plastid. Functionally, one of the primary rRNA binding proteins, it binds directly to 16S rRNA where it nucleates assembly of the body of the 30S subunit. In terms of biological role, with S5 and S12 plays an important role in translational accuracy. The polypeptide is Small ribosomal subunit protein uS4c (rps4) (Aneura mirabilis (Parasitic liverwort)).